Here is a 129-residue protein sequence, read N- to C-terminus: Virion-associated protein (129 aa).

2 coiled-coil regions span residues 1 to 31 and 38 to 59; these read MANLNQIQKEVSEILSDQKSMKADIKAILEL and IKESLETVAAKIVNDLTKLIND. Residues 122–129 are capsid binding; it reads PAGWPNQY.

It belongs to the caulimovirus ORF III family. Homotetramer, through coiled-coil domain. Homotrimer when interacts with icosehadral capsid. Interacts with capsid protein, and with Movement protein.

Its subcellular location is the virion. The protein resides in the host cell junction. The protein localises to the host plasmodesma. Plays a role in virus cell-to-cell and plant-to-plant transmission. Interacts with virion icosahedral capsid and movement protein, thereby facilitating virion cell-to-cell transmission through plasmodesmata opened by viral movement protein. Also interacts with aphid transmission factor, attaching the virion to aphid stylet when the animal feeds on an virus infected plant. Aphid saliva may later detach the virion, inducing release of infectious particles when the animal feeds on a new plant. The sequence is that of Virion-associated protein from Cauliflower mosaic virus (strain D/H) (CaMV).